We begin with the raw amino-acid sequence, 160 residues long: S-protein homolog 13 (160 aa).

The N-terminal stretch at 1 to 27 (MGRDLGWCFFVATVLLAAVLLPAPTIA) is a signal peptide.

Belongs to the plant self-incompatibility (S1) protein family.

The protein localises to the secreted. This chain is S-protein homolog 13, found in Arabidopsis thaliana (Mouse-ear cress).